The primary structure comprises 286 residues: 2-dehydro-3-deoxyphosphooctonate aldolase (286 aa).

The protein belongs to the KdsA family.

The protein localises to the cytoplasm. It catalyses the reaction D-arabinose 5-phosphate + phosphoenolpyruvate + H2O = 3-deoxy-alpha-D-manno-2-octulosonate-8-phosphate + phosphate. It participates in carbohydrate biosynthesis; 3-deoxy-D-manno-octulosonate biosynthesis; 3-deoxy-D-manno-octulosonate from D-ribulose 5-phosphate: step 2/3. It functions in the pathway bacterial outer membrane biogenesis; lipopolysaccharide biosynthesis. In Shewanella denitrificans (strain OS217 / ATCC BAA-1090 / DSM 15013), this protein is 2-dehydro-3-deoxyphosphooctonate aldolase.